We begin with the raw amino-acid sequence, 221 residues long: RNA pyrophosphohydrolase (221 aa).

The 144-residue stretch at 6-149 (GFRPNVGIVL…KRSVYALALT (144 aa)) folds into the Nudix hydrolase domain. The short motif at 38–59 (GGIDRGETPEQAMFRELHEEVG) is the Nudix box element.

Belongs to the Nudix hydrolase family. RppH subfamily. A divalent metal cation is required as a cofactor.

Functionally, accelerates the degradation of transcripts by removing pyrophosphate from the 5'-end of triphosphorylated RNA, leading to a more labile monophosphorylated state that can stimulate subsequent ribonuclease cleavage. This chain is RNA pyrophosphohydrolase, found in Verminephrobacter eiseniae (strain EF01-2).